The chain runs to 853 residues: Protein translocase subunit SecA (853 aa).

ATP-binding positions include Q77, G95–T99, and D532.

The protein belongs to the SecA family. As to quaternary structure, monomer and homodimer. Part of the essential Sec protein translocation apparatus which comprises SecA, SecYEG and auxiliary proteins SecDF. Other proteins may also be involved.

It localises to the cell inner membrane. Its subcellular location is the cytoplasm. The catalysed reaction is ATP + H2O + cellular proteinSide 1 = ADP + phosphate + cellular proteinSide 2.. In terms of biological role, part of the Sec protein translocase complex. Interacts with the SecYEG preprotein conducting channel. Has a central role in coupling the hydrolysis of ATP to the transfer of proteins into and across the cell membrane, serving as an ATP-driven molecular motor driving the stepwise translocation of polypeptide chains across the membrane. In Thermosipho melanesiensis (strain DSM 12029 / CIP 104789 / BI429), this protein is Protein translocase subunit SecA.